Reading from the N-terminus, the 1030-residue chain is Exportin-T (1030 aa).

It belongs to the exportin family.

It localises to the nucleus. The protein localises to the cytoplasm. Its function is as follows. tRNA nucleus export receptor which facilitates tRNA translocation across the nuclear pore complex. Involved in pre-tRNA splicing, probably by affecting the interaction of pre-tRNA with splicing endonuclease. In Aspergillus niger (strain ATCC MYA-4892 / CBS 513.88 / FGSC A1513), this protein is Exportin-T (los1).